Consider the following 303-residue polypeptide: Carboxypeptidase B (303 aa).

A Peptidase M14 domain is found at 5–298 (SYHDYDEINA…EGVKVVANFV (294 aa)). Residues His-63 and Glu-66 each contribute to the Zn(2+) site. Substrate is bound by residues 63–66 (HARE), Arg-118, and 136–137 (NR). His-189 contributes to the Zn(2+) binding site. Substrate is bound by residues 190–191 (SY) and Tyr-241. Glu-264 functions as the Proton donor/acceptor in the catalytic mechanism.

This sequence belongs to the peptidase M14 family. The cofactor is Zn(2+).

It localises to the secreted. The enzyme catalyses Preferential release of a C-terminal lysine or arginine amino acid.. The polypeptide is Carboxypeptidase B (Astacus astacus (Noble crayfish)).